We begin with the raw amino-acid sequence, 645 residues long: Cilia- and flagella-associated protein 221 homolog (645 aa).

Residues glycine 381–proline 408 are disordered. The tract at residues threonine 428–arginine 435 is interaction with calmodulin.

Belongs to the PCDP1 family. In terms of assembly, interacts with calmodulin; calcium-dependent. Part of the PDCP1 complex composed of CFAP46, CFAP54, CFAP74 and CFAP221; the PDCP1 complex binds calmodulin.

It localises to the cytoplasm. It is found in the cytoskeleton. The protein resides in the cilium axoneme. Functionally, may play a role in cilium morphogenesis. The polypeptide is Cilia- and flagella-associated protein 221 homolog (Chlamydomonas reinhardtii (Chlamydomonas smithii)).